The following is a 524-amino-acid chain: Tubulin-specific chaperone E (524 aa).

Serine 2 bears the N-acetylserine mark. The CAP-Gly domain maps to 27-71 (GAVPPVAGLWLGVEWDNPERGKHDGSHEGTMYFKCRHPTGGSFVR). LRR repeat units follow at residues 154 to 175 (NIRV…VLIA), 180 to 201 (DLEA…PTLT), 206 to 227 (TLKT…HCAP), 231 to 253 (VLEE…NVLQ), 254 to 275 (KMRL…SLIA), 279 to 300 (RLEH…DAEI), and 309 to 330 (ALKY…NELD). Residues 343–381 (NPLSKADKAEEIIIAKIAQLRTLNRCQILPEERRGAELD) enclose the LRRCT domain. Residue lysine 460 is modified to N6-acetyllysine. Position 492 is a phosphoserine (serine 492).

Belongs to the TBCE family. As to quaternary structure, supercomplex made of cofactors A to E. Cofactors A and D function by capturing and stabilizing tubulin in a quasi-native conformation. Cofactor E binds to the cofactor D-tubulin complex; interaction with cofactor C then causes the release of tubulin polypeptides that are committed to the native state. Cofactors B and E can form a heterodimer which binds to alpha-tubulin and enhances their ability to dissociate tubulin heterodimers. Interacts with TBCD. As to expression, ubiquitously expressed.

Its subcellular location is the cytoplasm. The protein resides in the cytoskeleton. In terms of biological role, tubulin-folding protein; involved in the second step of the tubulin folding pathway and in the regulation of tubulin heterodimer dissociation. Required for correct organization of microtubule cytoskeleton and mitotic splindle, and maintenance of the neuronal microtubule network. In Mus musculus (Mouse), this protein is Tubulin-specific chaperone E (Tbce).